We begin with the raw amino-acid sequence, 138 residues long: Acidic phospholipase A2 BITP01A (138 aa).

Positions 1-16 are cleaved as a signal peptide; the sequence is MRTLWIMAVLLVGVEG. 7 cysteine pairs are disulfide-bonded: Cys42–Cys131, Cys44–Cys60, Cys59–Cys111, Cys65–Cys138, Cys66–Cys104, Cys73–Cys97, and Cys91–Cys102. Ca(2+)-binding residues include Tyr43, Gly45, and Gly47. His63 is an active-site residue. Asp64 lines the Ca(2+) pocket. Residue Asp105 is part of the active site.

Requires Ca(2+) as cofactor. Expressed by the venom gland.

It is found in the secreted. The enzyme catalyses a 1,2-diacyl-sn-glycero-3-phosphocholine + H2O = a 1-acyl-sn-glycero-3-phosphocholine + a fatty acid + H(+). Snake venom phospholipase A2 (PLA2) that induces edema in mice, produces neuromuscular blockade in chick biventer cervicis, increases CK release and produces myonecrosis. PLA2 catalyzes the calcium-dependent hydrolysis of the 2-acyl groups in 3-sn-phosphoglycerides. The chain is Acidic phospholipase A2 BITP01A from Bothrops insularis (Golden lancehead).